We begin with the raw amino-acid sequence, 430 residues long: GTPase Obg (430 aa).

Positions 1 to 158 (MFVDQVTISL…LDVTLELKLL (158 aa)) constitute an Obg domain. The disordered stretch occupies residues 118-145 (RGGRGGRGNSRFATPRNPAPDFSENGEP). Positions 159–329 (ADVGLVGFPS…LLYAIADKLD (171 aa)) constitute an OBG-type G domain. Residues 165-172 (GFPSVGKS), 190-194 (FTTIK), 212-215 (DLPG), 282-285 (NKMD), and 310-312 (STI) each bind GTP. Serine 172 and threonine 192 together coordinate Mg(2+). The 79-residue stretch at 352 to 430 (KHTPSQDKFT…ILGGEFEFVE (79 aa)) folds into the OCT domain.

Belongs to the TRAFAC class OBG-HflX-like GTPase superfamily. OBG GTPase family. In terms of assembly, monomer. Mg(2+) serves as cofactor.

Its subcellular location is the cytoplasm. In terms of biological role, an essential GTPase which binds GTP, GDP and possibly (p)ppGpp with moderate affinity, with high nucleotide exchange rates and a fairly low GTP hydrolysis rate. Plays a role in control of the cell cycle, stress response, ribosome biogenesis and in those bacteria that undergo differentiation, in morphogenesis control. The protein is GTPase Obg of Staphylococcus haemolyticus (strain JCSC1435).